The primary structure comprises 850 residues: Polyhomeotic-like protein 2 (850 aa).

Disordered stretches follow at residues 1-79, 233-314, 335-386, 402-436, and 528-553; these read MENE…QYLQ, QQTP…RAVP, LPQP…DHAL, THVHKPGNSQQCHLPTLDTGSQNGHPEGGSHPPQR, and MTSGNGNSASSIAGTAPQNGENKPPQ. Positions 15-32 are enriched in low complexity; that stretch reads SVTTNTSGTNSSSGCISS. Positions 33–56 are interaction with BMI1; that stretch reads SGGGGGSGGRPTAPQISVYSGIPD. A compositionally biased stretch (low complexity) spans 343 to 352; it reads PQPQFVAQQQ. Composition is skewed to polar residues over residues 368–380 and 402–425; these read LASVSPSLALQSS and THVHKPGNSQQCHLPTLDTGSQNG. The span at 529–543 shows a compositional bias: low complexity; that stretch reads TSGNGNSASSIAGTA. Positions 550–579 match the HD1 motif; sequence KPPQAIVKPQILTHVIEGFVIQEGAEPFPV. Glycyl lysine isopeptide (Lys-Gly) (interchain with G-Cter in SUMO2) cross-links involve residues Lys-590 and Lys-592. Positions 597–624 are disordered; sequence FLPEKPPQQDHTTTTDSEMEEPYLQESK. Position 611 is a phosphothreonine (Thr-611). Ser-613 carries the post-translational modification Phosphoserine. Lys-624 is covalently cross-linked (Glycyl lysine isopeptide (Lys-Gly) (interchain with G-Cter in SUMO2)). The segment at 625-659 adopts an FCS-type zinc-finger fold; the sequence is EEGTPLKLKCELCGRVDFAYKFKRSKRFCSMACAK. Zn(2+)-binding residues include Cys-634, Cys-637, Cys-653, and Cys-657. Disordered stretches follow at residues 676-712 and 725-764; these read RSKLQKAGTTTHNRRRASKASLPTLTKDTKKQPSGTV and SQEDSSRCSDNSSYEEPLSPISASSSTSRRRQGQRDLDLP. Lys-694 is covalently cross-linked (Glycyl lysine isopeptide (Lys-Gly) (interchain with G-Cter in SUMO2)). A compositionally biased stretch (polar residues) spans 696–712; sequence SLPTLTKDTKKQPSGTV. Position 743 is a phosphoserine (Ser-743). The 65-residue stretch at 786 to 850 folds into the SAM domain; that stretch reads WNVEDVYEFI…YARISMLKDS (65 aa). Residue Lys-839 forms a Glycyl lysine isopeptide (Lys-Gly) (interchain with G-Cter in SUMO2) linkage.

As to quaternary structure, component of a PRC1-like complex. Interacts with CBX4. Interacts with BMI1, PCGF2, PHC1 and RNF2. Interacts with CHTOP. Interacts with the N-terminal region of the SP1 transcription factor and with MAPKAPK2. Interacts with SAMD7. Interacts with SAMD11. In terms of tissue distribution, isoform 2 is ubiquitously expressed in embryos and adult tissues at much higher level than isoform 1.

The protein localises to the nucleus. Functionally, component of a Polycomb group (PcG) multiprotein PRC1-like complex, a complex class required to maintain the transcriptionally repressive state of many genes, including Hox genes, throughout development. PcG PRC1 complex acts via chromatin remodeling and modification of histones; it mediates monoubiquitination of histone H2A 'Lys-119', rendering chromatin heritably changed in its expressibility. The protein is Polyhomeotic-like protein 2 (Phc2) of Mus musculus (Mouse).